The following is a 364-amino-acid chain: Phosphoserine aminotransferase (364 aa).

Arginine 46 serves as a coordination point for L-glutamate. Residues 80–81 (AR), tryptophan 106, threonine 157, aspartate 176, and glutamine 199 contribute to the pyridoxal 5'-phosphate site. At lysine 200 the chain carries N6-(pyridoxal phosphate)lysine. Residue 241 to 242 (NT) participates in pyridoxal 5'-phosphate binding.

It belongs to the class-V pyridoxal-phosphate-dependent aminotransferase family. SerC subfamily. In terms of assembly, homodimer. It depends on pyridoxal 5'-phosphate as a cofactor.

The protein resides in the cytoplasm. It catalyses the reaction O-phospho-L-serine + 2-oxoglutarate = 3-phosphooxypyruvate + L-glutamate. The enzyme catalyses 4-(phosphooxy)-L-threonine + 2-oxoglutarate = (R)-3-hydroxy-2-oxo-4-phosphooxybutanoate + L-glutamate. It functions in the pathway amino-acid biosynthesis; L-serine biosynthesis; L-serine from 3-phospho-D-glycerate: step 2/3. Its pathway is cofactor biosynthesis; pyridoxine 5'-phosphate biosynthesis; pyridoxine 5'-phosphate from D-erythrose 4-phosphate: step 3/5. Its function is as follows. Catalyzes the reversible conversion of 3-phosphohydroxypyruvate to phosphoserine and of 3-hydroxy-2-oxo-4-phosphonooxybutanoate to phosphohydroxythreonine. This chain is Phosphoserine aminotransferase, found in Vibrio cholerae serotype O1 (strain ATCC 39315 / El Tor Inaba N16961).